A 503-amino-acid polypeptide reads, in one-letter code: Lactation elevated protein 1 homolog B (503 aa).

The segment at 108–155 (LQNQPTSELQDKVGSRETVNICRPDENVSNEKEDQQEESSKPHPPQGY) is disordered. Basic and acidic residues predominate over residues 130–148 (RPDENVSNEKEDQQEESSK). 159–166 (GNVGTGKT) serves as a coordination point for ATP.

It belongs to the AFG1 ATPase family.

The polypeptide is Lactation elevated protein 1 homolog B (lace1b) (Danio rerio (Zebrafish)).